The primary structure comprises 344 residues: Phosphoribosylformylglycinamidine cyclo-ligase (344 aa).

It belongs to the AIR synthase family.

It is found in the cytoplasm. It catalyses the reaction 2-formamido-N(1)-(5-O-phospho-beta-D-ribosyl)acetamidine + ATP = 5-amino-1-(5-phospho-beta-D-ribosyl)imidazole + ADP + phosphate + H(+). Its pathway is purine metabolism; IMP biosynthesis via de novo pathway; 5-amino-1-(5-phospho-D-ribosyl)imidazole from N(2)-formyl-N(1)-(5-phospho-D-ribosyl)glycinamide: step 2/2. The sequence is that of Phosphoribosylformylglycinamidine cyclo-ligase from Neisseria meningitidis serogroup C / serotype 2a (strain ATCC 700532 / DSM 15464 / FAM18).